The chain runs to 628 residues: Alpha-L-arabinofuranosidase A (628 aa).

Positions 1-25 are cleaved as a signal peptide; sequence MVAFSALSGVSALSLLLCLVQHAHG. N-linked (GlcNAc...) asparagine glycans are attached at residues asparagine 36, asparagine 51, asparagine 74, asparagine 152, asparagine 171, asparagine 260, asparagine 359, and asparagine 493.

It belongs to the glycosyl hydrolase 51 family.

It is found in the secreted. It catalyses the reaction Hydrolysis of terminal non-reducing alpha-L-arabinofuranoside residues in alpha-L-arabinosides.. The protein operates within glycan metabolism; L-arabinan degradation. In terms of biological role, alpha-L-arabinofuranosidase involved in the degradation of arabinoxylan, a major component of plant hemicellulose. Acts only on small linear 1,5-alpha-linked L-arabinofuranosyl oligosaccharides. This Aspergillus kawachii (strain NBRC 4308) (White koji mold) protein is Alpha-L-arabinofuranosidase A (abfA).